Consider the following 116-residue polypeptide: UPF0329 protein ECU05_1650 (116 aa).

The protein belongs to the UPF0329 family.

This is UPF0329 protein ECU05_1650 from Encephalitozoon cuniculi (strain GB-M1) (Microsporidian parasite).